The primary structure comprises 272 residues: Alcohol dehydrogenase-related 31 kDa protein (272 aa).

Residue 11-34 (YVADCGGIALETSKVLMTKNIAKL) coordinates NAD(+). Position 139 (Ser-139) interacts with substrate. The active-site Proton acceptor is Tyr-152.

Belongs to the short-chain dehydrogenases/reductases (SDR) family.

This is Alcohol dehydrogenase-related 31 kDa protein (Adhr) from Drosophila mauritiana (Fruit fly).